The sequence spans 376 residues: Alanine racemase (376 aa).

Lysine 36 serves as the catalytic Proton acceptor; specific for D-alanine. Residue lysine 36 is modified to N6-(pyridoxal phosphate)lysine. Residue arginine 134 participates in substrate binding. Catalysis depends on tyrosine 266, which acts as the Proton acceptor; specific for L-alanine. Substrate is bound at residue methionine 314.

This sequence belongs to the alanine racemase family. Requires pyridoxal 5'-phosphate as cofactor.

The enzyme catalyses L-alanine = D-alanine. The protein operates within amino-acid biosynthesis; D-alanine biosynthesis; D-alanine from L-alanine: step 1/1. Catalyzes the interconversion of L-alanine and D-alanine. May also act on other amino acids. This Nitratidesulfovibrio vulgaris (strain DP4) (Desulfovibrio vulgaris) protein is Alanine racemase (alr).